A 345-amino-acid chain; its full sequence is Phosphoribosylformylglycinamidine cyclo-ligase (345 aa).

It belongs to the AIR synthase family.

Its subcellular location is the cytoplasm. The enzyme catalyses 2-formamido-N(1)-(5-O-phospho-beta-D-ribosyl)acetamidine + ATP = 5-amino-1-(5-phospho-beta-D-ribosyl)imidazole + ADP + phosphate + H(+). Its pathway is purine metabolism; IMP biosynthesis via de novo pathway; 5-amino-1-(5-phospho-D-ribosyl)imidazole from N(2)-formyl-N(1)-(5-phospho-D-ribosyl)glycinamide: step 2/2. The sequence is that of Phosphoribosylformylglycinamidine cyclo-ligase from Actinobacillus pleuropneumoniae serotype 5b (strain L20).